The sequence spans 194 residues: Lectin-C (194 aa).

Residues M1–G26 form the signal peptide. Positions Q27 to G44 are cleaved as a propeptide — removed in mature form. Chitin-binding type-1 domains are found at residues A45–Y86, N87–Y127, and W128–L168. Intrachain disulfides connect C48–C63, C57–C69, C62–C76, C80–C84, C89–C104, C98–C110, C103–C117, C121–C125, C130–C145, C139–C151, C144–C158, and C162–C166. A propeptide spans L171–S194 (removed in mature form).

In terms of assembly, homodimer. The homodimers are asymmetric; formed in a 'head-to-tail' fashion via hydrophobic interactions between aromatic residues of the carbohydrate-binding sites of each subunit.

Its function is as follows. N-acetyl-D-glucosamine binding lectin. Almost no hemagglutinating activity towards human erythrocytes. Low mitogenic activity towards human peripheral blood lymphocytes. In Phytolacca americana (American pokeweed), this protein is Lectin-C.